The chain runs to 475 residues: ATP synthase subunit beta, chloroplastic (475 aa).

An ATP-binding site is contributed by 156–163 (GGAGVGKT).

It belongs to the ATPase alpha/beta chains family. F-type ATPases have 2 components, CF(1) - the catalytic core - and CF(0) - the membrane proton channel. CF(1) has five subunits: alpha(3), beta(3), gamma(1), delta(1), epsilon(1). CF(0) has four main subunits: a(1), b(1), b'(1) and c(9-12).

It is found in the plastid. Its subcellular location is the chloroplast thylakoid membrane. It carries out the reaction ATP + H2O + 4 H(+)(in) = ADP + phosphate + 5 H(+)(out). In terms of biological role, produces ATP from ADP in the presence of a proton gradient across the membrane. The catalytic sites are hosted primarily by the beta subunits. The sequence is that of ATP synthase subunit beta, chloroplastic from Phaeodactylum tricornutum (strain CCAP 1055/1).